Consider the following 250-residue polypeptide: Ino eighty subunit 3 (250 aa).

Residues 29 to 70 (PDFLEKDPHHKKFHNADGLNQQGSSTPSTATDANAASTASTH) form a disordered region. Positions 52–70 (SSTPSTATDANAASTASTH) are enriched in low complexity. Residues S157 and S211 each carry the phosphoserine modification.

In terms of assembly, component of the chromatin-remodeling INO80 complex, at least composed of ARP4, ARP5, ARP8, RVB1, RVB2, TAF14, NHP10, IES1, IES3, IES4, IES6, ACT1, IES2, IES5 and INO80.

The protein localises to the nucleus. In terms of biological role, probably involved in transcription regulation via its interaction with the INO80 complex, a chromatin-remodeling complex. This Saccharomyces cerevisiae (strain ATCC 204508 / S288c) (Baker's yeast) protein is Ino eighty subunit 3 (IES3).